We begin with the raw amino-acid sequence, 299 residues long: Pectin lyase (299 aa).

Residues 1–18 (MKFSTFVSLGLTAITALA) form the signal peptide. Low complexity-rich tracts occupy residues 82–91 (RSAATSPSSD) and 232–246 (SASA…TTRT). 2 disordered regions span residues 82-105 (RSAA…PSPS) and 227-246 (SRGR…TTRT).

Belongs to the polysaccharide lyase 1 family.

It localises to the secreted. It carries out the reaction Eliminative cleavage of (1-&gt;4)-alpha-D-galacturonan methyl ester to give oligosaccharides with 4-deoxy-6-O-methyl-alpha-D-galact-4-enuronosyl groups at their non-reducing ends.. This chain is Pectin lyase (PELA), found in Peyronellaea pinodes (Pea foot rot fungus).